Reading from the N-terminus, the 96-residue chain is Large ribosomal subunit protein bL25 (96 aa).

Belongs to the bacterial ribosomal protein bL25 family. Part of the 50S ribosomal subunit; part of the 5S rRNA/L5/L18/L25 subcomplex. Contacts the 5S rRNA. Binds to the 5S rRNA independently of L5 and L18.

Functionally, this is one of the proteins that binds to the 5S RNA in the ribosome where it forms part of the central protuberance. The sequence is that of Large ribosomal subunit protein bL25 from Francisella tularensis subsp. holarctica (strain FTNF002-00 / FTA).